Here is a 393-residue protein sequence, read N- to C-terminus: NAD(P)H-quinone oxidoreductase subunit H, chloroplastic (393 aa).

It belongs to the complex I 49 kDa subunit family. In terms of assembly, NDH is composed of at least 16 different subunits, 5 of which are encoded in the nucleus.

The protein resides in the plastid. Its subcellular location is the chloroplast thylakoid membrane. The enzyme catalyses a plastoquinone + NADH + (n+1) H(+)(in) = a plastoquinol + NAD(+) + n H(+)(out). It carries out the reaction a plastoquinone + NADPH + (n+1) H(+)(in) = a plastoquinol + NADP(+) + n H(+)(out). NDH shuttles electrons from NAD(P)H:plastoquinone, via FMN and iron-sulfur (Fe-S) centers, to quinones in the photosynthetic chain and possibly in a chloroplast respiratory chain. The immediate electron acceptor for the enzyme in this species is believed to be plastoquinone. Couples the redox reaction to proton translocation, and thus conserves the redox energy in a proton gradient. This Calycanthus floridus var. glaucus (Eastern sweetshrub) protein is NAD(P)H-quinone oxidoreductase subunit H, chloroplastic.